A 258-amino-acid polypeptide reads, in one-letter code: Acetylglutamate kinase (258 aa).

Substrate contacts are provided by residues 44-45, R66, and N158; that span reads GG. Residues 181–186 and 209–211 each bind ATP; these read DISSIL and IIT.

Belongs to the acetylglutamate kinase family. ArgB subfamily. In terms of assembly, homodimer.

The protein localises to the cytoplasm. It catalyses the reaction N-acetyl-L-glutamate + ATP = N-acetyl-L-glutamyl 5-phosphate + ADP. It functions in the pathway amino-acid biosynthesis; L-arginine biosynthesis; N(2)-acetyl-L-ornithine from L-glutamate: step 2/4. Functionally, catalyzes the ATP-dependent phosphorylation of N-acetyl-L-glutamate. This chain is Acetylglutamate kinase, found in Buchnera aphidicola subsp. Schizaphis graminum (strain Sg).